Here is a 382-residue protein sequence, read N- to C-terminus: MSINVFWFLPTHGDGHYLGSSEGARAVDYSYLQQIAQAADRLGFGGVLIPTGRSCEDSWLVAASLIPVTQRLKFLVALRPGIISPTLAARQAATLDRLSNGRALFNLVTGGDPEELAAEGLHLNHTERYEASAEFTHVWRKVLEGETVDFAGKHIQVKGAKLLFPPVQHPRPPLYFGGSSAAAQDLAAEQVELYLTWGETPEQVKEKVEEVRAKAAAKGRTVRFGIRLHVIVRETTEEAWRAANRLIANLDDKTIADAQQAFARFDSVGQQRMAALHGGKKDNLEISPNLWAGVGLVRGGAGTALVGDGPTVAQRIQEYADLGIDTFVFSGYPHLEEAYRVSELLFPHLDLATTELPTQRPATQPQGEVVANIYVPQKVSQS.

Belongs to the SsuD family. As to quaternary structure, homotetramer.

It carries out the reaction an alkanesulfonate + FMNH2 + O2 = an aldehyde + FMN + sulfite + H2O + 2 H(+). Its function is as follows. Catalyzes the desulfonation of aliphatic sulfonates. This is Alkanesulfonate monooxygenase from Yersinia pseudotuberculosis serotype O:1b (strain IP 31758).